The chain runs to 204 residues: Large ribosomal subunit protein bL25 (204 aa).

Ser123 carries the post-translational modification Phosphoserine.

This sequence belongs to the bacterial ribosomal protein bL25 family. CTC subfamily. Part of the 50S ribosomal subunit; part of the 5S rRNA/L5/L18/L25 subcomplex. Contacts the 5S rRNA. Binds to the 5S rRNA independently of L5 and L18.

Its function is as follows. This is one of the proteins that binds to the 5S RNA in the ribosome where it forms part of the central protuberance. The chain is Large ribosomal subunit protein bL25 from Pseudomonas aeruginosa (strain UCBPP-PA14).